The chain runs to 473 residues: Adhesive plaque matrix protein 2 (473 aa).

Residues 1 to 17 (MLFSFFLLLTCTQLCLG) form the signal peptide. 4 positions are modified to 3',4'-dihydroxyphenylalanine: Y23, Y31, Y36, and Y43. 11 EGF-like domains span residues 45 to 81 (PVNP…YNCN), 82 to 117 (LKNA…GRLC), 118 to 154 (EKNV…GPRC), 155 to 191 (EVHA…GPTC), 192 to 228 (QENA…GPEC), 229 to 265 (ERYV…GPTC), 266 to 301 (KVNV…GPTC), 302 to 340 (GENV…PTCE), 342 to 378 (KPNP…RHCT), 383 to 420 (KPNP…RHCT), and 425 to 461 (KKNP…RYCS). 33 disulfides stabilise this stretch: C49–C60, C54–C69, C71–C80, C86–C97, C91–C106, C108–C117, C122–C133, C127–C143, C145–C154, C159–C170, C164–C180, C182–C191, C196–C207, C201–C217, C219–C228, C233–C244, C238–C254, C256–C265, C270–C281, C275–C290, C292–C301, C306–C317, C311–C328, C330–C339, C346–C357, C351–C366, C368–C377, C387–C399, C393–C408, C410–C419, C429–C440, C434–C449, and C451–C460. N93 carries an N-linked (GlcNAc...) asparagine glycan.

Contains L-DOPA (3',4'-dihydroxyphenylalanine). As to expression, produced by the byssal gland.

Its subcellular location is the secreted. Functionally, provides adhesiveness to the mussel's foot. Mussels produce one of the strongest water insoluble glues. The mussel's adhesive is a bundle of threads, called a byssus, formed by a fibrous collagenous core coated with adhesive proteins. This chain is Adhesive plaque matrix protein 2 (FP2), found in Mytilus galloprovincialis (Mediterranean mussel).